The sequence spans 93 residues: Stromal cell-derived factor 1 (93 aa).

An N-terminal signal peptide occupies residues 1-21; that stretch reads MNAKVVVVLVLVLTALCLSDG. The Receptor activation motif motif lies at 22 to 23; that stretch reads KP. A receptor and heparin binding region spans residues 29–33; the sequence is RCPCR. 2 disulfides stabilise this stretch: cysteine 30–cysteine 55 and cysteine 32–cysteine 71. Receptor binding stretches follow at residues 39–41, 48–50, and 60–70; these read VAR, KIL, and VARLKNNNRQV. Heparin is bound by residues 41–51, arginine 62, glutamine 69, and lysine 85; that span reads RANVKHLKILN.

The protein belongs to the intercrine alpha (chemokine CxC) family. In terms of assembly, monomer or homodimer; in equilibrium. Dimer formation is induced by non acidic pH and the presence of multivalent anions, and by binding to CXCR4 or heparin. Monomeric form is required for full chemotactic activity and resistance to ischemia/reperfusion injury, whereas the dimeric form acts as a partial agonist of CXCR4, stimulating Ca2+ mobilization but with no chemotactic activity and instead acts as a selective antagonist that blocks chemotaxis induced by the monomeric form. Interacts with the N-terminus of ACKR3. Interacts with integrin subunit ITGB3 (via the allosteric site (site 2)). Interacts with TNFAIP6 (via Link domain). As to quaternary structure, (Microbial infection) Interacts with molluscum contagiosum virus protein MC148. In terms of processing, processed forms SDF-1-beta(3-72) and SDF-1-alpha(3-67) are produced after secretion by proteolytic cleavage of isoforms Beta and Alpha, respectively. The N-terminal processing is probably achieved by DPP4. Isoform Alpha is first cleaved at the C-terminus to yield a SDF-1-alpha(1-67) intermediate before being processed at the N-terminus. The C-terminal processing of isoform Alpha is reduced by binding to heparin and, probably, cell surface proteoglycans. As to expression, isoform Alpha and isoform Beta are ubiquitously expressed, with highest levels detected in liver, pancreas and spleen. Isoform Gamma is mainly expressed in heart, with weak expression detected in several other tissues. Isoform Delta, isoform Epsilon and isoform Theta have highest expression levels in pancreas, with lower levels detected in heart, kidney, liver and spleen.

The protein localises to the secreted. Chemoattractant active on T-lymphocytes and monocytes but not neutrophils. Activates the C-X-C chemokine receptor CXCR4 to induce a rapid and transient rise in the level of intracellular calcium ions and chemotaxis. SDF-1-beta(3-72) and SDF-1-alpha(3-67) show a reduced chemotactic activity. Binding to cell surface proteoglycans seems to inhibit formation of SDF-1-alpha(3-67) and thus to preserve activity on local sites. Also binds to atypical chemokine receptor ACKR3, which activates the beta-arrestin pathway and acts as a scavenger receptor for SDF-1. Binds to the allosteric site (site 2) of integrins and activates integrins ITGAV:ITGB3, ITGA4:ITGB1 and ITGA5:ITGB1 in a CXCR4-independent manner. Acts as a positive regulator of monocyte migration and a negative regulator of monocyte adhesion via the LYN kinase. Stimulates migration of monocytes and T-lymphocytes through its receptors, CXCR4 and ACKR3, and decreases monocyte adherence to surfaces coated with ICAM-1, a ligand for beta-2 integrins. SDF1A/CXCR4 signaling axis inhibits beta-2 integrin LFA-1 mediated adhesion of monocytes to ICAM-1 through LYN kinase. Inhibits CXCR4-mediated infection by T-cell line-adapted HIV-1. Plays a protective role after myocardial infarction. Induces down-regulation and internalization of ACKR3 expressed in various cells. Has several critical functions during embryonic development; required for B-cell lymphopoiesis, myelopoiesis in bone marrow and heart ventricular septum formation. Stimulates the proliferation of bone marrow-derived B-cell progenitors in the presence of IL7 as well as growth of stromal cell-dependent pre-B-cells. This Homo sapiens (Human) protein is Stromal cell-derived factor 1 (CXCL12).